A 171-amino-acid polypeptide reads, in one-letter code: MDNRKMLLRQKLKINKQKSLRVTLMSTLPRDMATTIEDCSLITSPELERILDKVQKKWNFELHKNDFAIKYSEHRKEYSWEYEVINHVQQTKLPDEQVYLYLGIEDSPIFLINGNWIIENFNFLWEQINNSDLWIIDFNFKYGVLVSRYGGYLDHDPNPNEIIYAVTEWGI.

In Bacillus subtilis (strain 168), this protein is SPbeta prophage-derived uncharacterized protein YokC (yokC).